The primary structure comprises 140 residues: uncharacterized protein (140 aa).

3 helical membrane passes run 42–62 (AFLF…IFAS), 65–85 (ASFL…SALG), and 96–116 (RASD…MLCF).

The protein resides in the membrane. This is an uncharacterized protein from Saccharomyces cerevisiae (strain ATCC 204508 / S288c) (Baker's yeast).